Here is a 251-residue protein sequence, read N- to C-terminus: Flap endonuclease Xni (251 aa).

D104 contributes to the Mg(2+) binding site. A 5'-3' exonuclease domain is found at 160–249; it reads VQPQQLPDYW…IDGNLQQLRL (90 aa). K(+) contacts are provided by L171, A172, P180, V182, and I185. The segment at 184 to 189 is interaction with DNA; it reads GIGPKS.

This sequence belongs to the Xni family. Mg(2+) is required as a cofactor. It depends on K(+) as a cofactor.

Has flap endonuclease activity. During DNA replication, flap endonucleases cleave the 5'-overhanging flap structure that is generated by displacement synthesis when DNA polymerase encounters the 5'-end of a downstream Okazaki fragment. The sequence is that of Flap endonuclease Xni from Escherichia coli O7:K1 (strain IAI39 / ExPEC).